The primary structure comprises 406 residues: Homocysteine-responsive endoplasmic reticulum-resident ubiquitin-like domain member 2 protein (406 aa).

The 80-residue stretch at 10–89 folds into the Ubiquitin-like domain; sequence VTLIIKAPNQ…HMVHLVCTSR (80 aa). Residues 86–154 are disordered; that stretch reads CTSRTPPSSP…TLPQAQTDQA (69 aa). Composition is skewed to low complexity over residues 87-98 and 106-126; these read TSRTPPSSPKSS and ALAS…PSSG. The segment covering 127 to 154 has biased composition (polar residues); it reads QETLSLAVGSSSEGLRQRTLPQAQTDQA. A helical membrane pass occupies residues 302–322; sequence FIMVMGAMLLVYLHQAGWFPF.

The protein localises to the membrane. Could be involved in the unfolded protein response (UPR) pathway. The sequence is that of Homocysteine-responsive endoplasmic reticulum-resident ubiquitin-like domain member 2 protein (HERPUD2) from Homo sapiens (Human).